Here is a 146-residue protein sequence, read N- to C-terminus: Holo-[acyl-carrier-protein] synthase (146 aa).

Mg(2+) contacts are provided by aspartate 8 and glutamate 61.

This sequence belongs to the P-Pant transferase superfamily. AcpS family. Requires Mg(2+) as cofactor.

The protein localises to the cytoplasm. The enzyme catalyses apo-[ACP] + CoA = holo-[ACP] + adenosine 3',5'-bisphosphate + H(+). Its function is as follows. Transfers the 4'-phosphopantetheine moiety from coenzyme A to a Ser of acyl-carrier-protein. The polypeptide is Holo-[acyl-carrier-protein] synthase (Rhodopseudomonas palustris (strain TIE-1)).